Consider the following 224-residue polypeptide: Cytidylate kinase (224 aa).

Residue 11 to 19 (GPAAAGKST) coordinates ATP.

Belongs to the cytidylate kinase family. Type 1 subfamily.

The protein resides in the cytoplasm. It catalyses the reaction CMP + ATP = CDP + ADP. The catalysed reaction is dCMP + ATP = dCDP + ADP. The protein is Cytidylate kinase of Geobacillus kaustophilus (strain HTA426).